The primary structure comprises 400 residues: Cysteine desulfurase 1 (400 aa).

Pyridoxal 5'-phosphate contacts are provided by residues 71 to 72 (GT), N150, Q178, and 198 to 200 (SGH). Residue K201 is modified to N6-(pyridoxal phosphate)lysine. Pyridoxal 5'-phosphate is bound at residue T236. Residue C324 is the Cysteine persulfide intermediate of the active site. C324 provides a ligand contact to [2Fe-2S] cluster.

This sequence belongs to the class-V pyridoxal-phosphate-dependent aminotransferase family. NifS/IscS subfamily. In terms of assembly, homodimer. Pyridoxal 5'-phosphate serves as cofactor.

The catalysed reaction is (sulfur carrier)-H + L-cysteine = (sulfur carrier)-SH + L-alanine. Its function is as follows. Catalyzes the removal of elemental sulfur atoms from cysteine to produce alanine. Seems to participate in the biosynthesis of the nitrogenase metalloclusters by providing the inorganic sulfur required for the Fe-S core formation. The protein is Cysteine desulfurase 1 of Trichormus variabilis (strain ATCC 29413 / PCC 7937) (Anabaena variabilis).